The primary structure comprises 888 residues: Patched domain-containing protein 1 (888 aa).

The helical transmembrane segment at 20–40 threads the bilayer; that stretch reads FIASHPVFFASAPVLISILLG. Asn77, Asn133, and Asn167 each carry an N-linked (GlcNAc...) asparagine glycan. One can recognise an SSD domain in the interval 268–427; the sequence is SERYLVTSLI…LSFYGSSLVF (160 aa). The next 2 helical transmembrane spans lie at 273-293 and 298-318; these read VTSLILVVTMAILCCSMQDCV and WLGLLGLVTISLATLTAAGII. N-linked (GlcNAc...) asparagine glycans are attached at residues Asn319 and Asn326. A run of 4 helical transmembrane segments spans residues 328-348, 373-393, 407-427, and 502-522; these read TFLGVPFVMLGHGLYGTFEML, LSFSLTTAMYLVTFGIGASPF, CIAIFFNYLYVLSFYGSSLVF, and PFVVLFYLIYISFALMGYLQV. N-linked (GlcNAc...) asparagine glycosylation is found at Asn568, Asn599, and Asn608. The next 2 helical transmembrane spans lie at 707–727 and 738–758; these read ALFLLFFSAFLVADSLINVWI and VIGFMTLWKVELDCISVLCLI. N-linked (GlcNAc...) asparagine glycosylation is present at Asn762. Residues 795–815 form a helical membrane-spanning segment; the sequence is GVAILQSYLCYIVGLIPLAAV. N-linked (GlcNAc...) asparagine glycosylation occurs at Asn818. Residues 826–846 traverse the membrane as a helical segment; sequence CLFLIAFVTFFHCFAILPVIL.

This sequence belongs to the patched family. As to expression, widely expressed, including in various regions of the brain with highest expression in the gray and white cerebellum, followed by the cerebellar vermis and the pituitary gland.

It is found in the cell membrane. The protein resides in the cell projection. The protein localises to the dendritic spine. Functionally, required for the development and function of the thalamic reticular nucleus (TRN), a part of the thalamus that is critical for thalamocortical transmission, generation of sleep rhythms, sensorimotor processing and attention. Can bind cholesterol in vitro. This is Patched domain-containing protein 1 from Homo sapiens (Human).